The following is a 435-amino-acid chain: Thiosulfate sulfurtransferase YnjE (435 aa).

The N-terminal stretch at Met-1–Ala-23 is a signal peptide. Rhodanese domains are found at residues Gln-36 to Lys-138, Pro-164 to Arg-270, and His-304 to Ala-425. The active-site Cysteine persulfide intermediate is Cys-385. Arg-390 provides a ligand contact to substrate.

As to quaternary structure, monomer.

It localises to the periplasm. The catalysed reaction is thiosulfate + hydrogen cyanide = thiocyanate + sulfite + 2 H(+). The polypeptide is Thiosulfate sulfurtransferase YnjE (ynjE) (Escherichia coli (strain K12)).